Consider the following 569-residue polypeptide: Urease subunit alpha (569 aa).

The Urease domain maps to 131–569 (GAIDSHIHFI…LPLAQRYLLL (439 aa)). Ni(2+) is bound by residues His136, His138, and Lys219. Lys219 is modified (N6-carboxylysine). His221 contributes to the substrate binding site. Ni(2+)-binding residues include His248 and His274. His322 functions as the Proton donor in the catalytic mechanism. Residue Asp362 coordinates Ni(2+).

Belongs to the metallo-dependent hydrolases superfamily. Urease alpha subunit family. In terms of assembly, heterotrimer of UreA (gamma), UreB (beta) and UreC (alpha) subunits. Three heterotrimers associate to form the active enzyme. Ni cation serves as cofactor. Post-translationally, carboxylation allows a single lysine to coordinate two nickel ions.

Its subcellular location is the cytoplasm. It carries out the reaction urea + 2 H2O + H(+) = hydrogencarbonate + 2 NH4(+). It participates in nitrogen metabolism; urea degradation; CO(2) and NH(3) from urea (urease route): step 1/1. In Prochlorococcus marinus (strain NATL2A), this protein is Urease subunit alpha.